We begin with the raw amino-acid sequence, 392 residues long: Iripin-1 (392 aa).

Positions 1 to 16 (MKPLVPLLFLLVSCRA) are cleaved as a signal peptide. Asn104, Asn196, and Asn265 each carry an N-linked (GlcNAc...) asparagine glycan.

The protein belongs to the serpin family. In terms of assembly, interacts with human KLKB1. Interacts with human ST14. Interacts with human PLG (plasmin). As to expression, highly expressed in salivary gland. Expressed in midgut and ovary.

It is found in the secreted. Functionally, serine protease inhibitor that modulates blood feeding of ticks on vertebrate species. Modestly inhibits human trypsin, plasma kallikrein (KLKB1), matriptase (ST14) and plasmin (PLG) via a classic serpin inhibitory mechanism. Modestly reduces enzymatic activity of human alpha-chymotrypsin, coagulation factor Xa (F10), factor XIIa (F12), cathepsin G (CTSG), tPA/tissue-type plasminogen activator (PLAT) and uPA/urokinase-type plasminogen activator (PLAU). Probably acts as a substrate rather than an inhibitor for the human neutrophil elastase (ELANE) and thus reduces its enzymatic activity in in vitro assays. Decreases expression of adhesion molecules VCAM1 and CD99 on the surface of human cells. Increases the production of chemokines for neutrophils and monocytes, such as KC/CXCL1, MIP-2/CXCL2 and MIP-1/CCL2, and anti-inflammatory cytokine IL10 in mouse inflammation models. Reduces the recruitment of mouse neutrophils and monocytes to the site of inflammation. Decreases expression of CXCR2 on the surface of mouse neutrophils. Increases expression of integrin ITGAM/ITGB2 on the surface of mouse neutrophils. This Ixodes ricinus (Common tick) protein is Iripin-1.